The following is a 185-amino-acid chain: Cell wall protein phiA (185 aa).

Residues 1–18 (MQIKSFVLAASAAATASA) form the signal peptide. Asn60 carries an N-linked (GlcNAc...) asparagine glycan.

It belongs to the phiA family.

Its subcellular location is the secreted. The protein localises to the cell wall. Cell wall protein involved in development of asexual structures such as phialide and conidium development, and thus required for spore formation. Plays a role as a general stress protectant produced by the fungus in competition with antagonistic bacteria. The polypeptide is Cell wall protein phiA (Aspergillus fumigatus (strain CBS 144.89 / FGSC A1163 / CEA10) (Neosartorya fumigata)).